Here is a 97-residue protein sequence, read N- to C-terminus: Eotaxin (97 aa).

The first 23 residues, methionine 1 to alanine 23, serve as a signal peptide directing secretion. 2 cysteine pairs are disulfide-bonded: cysteine 32-cysteine 57 and cysteine 33-cysteine 73. A glycan (O-linked (GalNAc...) threonine) is linked at threonine 94.

Belongs to the intercrine beta (chemokine CC) family.

Its subcellular location is the secreted. In terms of biological role, in response to the presence of allergens, this protein directly promotes the accumulation of eosinophils (a prominent feature of allergic inflammatory reactions), but not lymphocytes, macrophages or neutrophils. Binds to CCR3. This is Eotaxin (Ccl11) from Rattus norvegicus (Rat).